Consider the following 197-residue polypeptide: Protein mago nashi homolog (197 aa).

Positions 1-10 are enriched in basic and acidic residues; that stretch reads MSDVDTKIEL. The tract at residues 1–43 is disordered; the sequence is MSDVDTKIELATDSAMDITSPENDNNKTTATATSSSETQTTED. Residues 28–42 are compositionally biased toward low complexity; the sequence is TTATATSSSETQTTE.

The protein belongs to the mago nashi family.

The protein resides in the nucleus. The chain is Protein mago nashi homolog (magoh) from Dictyostelium discoideum (Social amoeba).